A 231-amino-acid polypeptide reads, in one-letter code: Putative transglycosylase H16_A0665 (231 aa).

Residues 8–28 (FIKLLVLAVIGGALLAAIAIL) form a helical membrane-spanning segment.

Belongs to the glycosyltransferase 51 family.

It localises to the secreted. The protein resides in the membrane. It functions in the pathway cell wall biogenesis; peptidoglycan biosynthesis. Functionally, cell wall formation. The protein is Putative transglycosylase H16_A0665 of Cupriavidus necator (strain ATCC 17699 / DSM 428 / KCTC 22496 / NCIMB 10442 / H16 / Stanier 337) (Ralstonia eutropha).